Reading from the N-terminus, the 491-residue chain is MIRVRGIHSTAIAGLLDEAGFRFADLSQELLARIPQLRVEERVLVTVKDTDDRSGVVVLGDRAVVEKVAYLLRAVIPGALVSYVGEGPYTTYAVRLLSRVEGDVYEAEYSPGKRTTVKLRRPHVEGEVIMAHVIRASPEAPLLKEGVAITGSLVRLVQFDRHSVSEHIRDENLRLQLLTLAMTSAPTGWGVHFRSASKRASIVDVMAEIKALSEKAEKILKEVAPKEPGVVVPGEAIAIVEIPADASIRMDALRSRYYPTLPLHHLLKRLGDDELSRAVDFSERLLAGCEKCLSSTGAIEVFLERLSSLKGRQVSVLHRKVAGAGHVWSAEVESVKRMTVVLKRVVSSPGLYDGFEGLKREPGDVIRSYTWLFGRAVVHFYTSARGELKGVYVNINAPVFFAGNANTLGYVDLGVDVTRAADEEPKVVDLAEFLDLVERGVLDKQLAGSYLEFAESVKHLLEKDIGEDLPARIMQAQKSIFSFETDKLLAV.

This sequence belongs to the FAU-1 family.

Probable RNase involved in rRNA stability through maturation and/or degradation of precursor rRNAs. Binds to RNA in loop regions with AU-rich sequences. This chain is Probable ribonuclease FAU-1, found in Thermofilum pendens (strain DSM 2475 / Hrk 5).